The following is a 423-amino-acid chain: Histidine--tRNA ligase (423 aa).

Belongs to the class-II aminoacyl-tRNA synthetase family. In terms of assembly, homodimer.

The protein resides in the cytoplasm. It catalyses the reaction tRNA(His) + L-histidine + ATP = L-histidyl-tRNA(His) + AMP + diphosphate + H(+). The chain is Histidine--tRNA ligase from Haemophilus influenzae (strain PittEE).